We begin with the raw amino-acid sequence, 227 residues long: Large ribosomal subunit protein bL25 (227 aa).

It belongs to the bacterial ribosomal protein bL25 family. CTC subfamily. As to quaternary structure, part of the 50S ribosomal subunit; part of the 5S rRNA/L5/L18/L25 subcomplex. Contacts the 5S rRNA. Binds to the 5S rRNA independently of L5 and L18.

In terms of biological role, this is one of the proteins that binds to the 5S RNA in the ribosome where it forms part of the central protuberance. This Polaromonas sp. (strain JS666 / ATCC BAA-500) protein is Large ribosomal subunit protein bL25.